A 239-amino-acid polypeptide reads, in one-letter code: Uracil-DNA glycosylase (239 aa).

The Proton acceptor role is filled by Asp65.

Belongs to the uracil-DNA glycosylase (UDG) superfamily. UNG family.

The protein localises to the cytoplasm. It catalyses the reaction Hydrolyzes single-stranded DNA or mismatched double-stranded DNA and polynucleotides, releasing free uracil.. Excises uracil residues from the DNA which can arise as a result of misincorporation of dUMP residues by DNA polymerase or due to deamination of cytosine. This chain is Uracil-DNA glycosylase, found in Levilactobacillus brevis (strain ATCC 367 / BCRC 12310 / CIP 105137 / JCM 1170 / LMG 11437 / NCIMB 947 / NCTC 947) (Lactobacillus brevis).